Here is a 532-residue protein sequence, read N- to C-terminus: P granule abnormality protein 2 (532 aa).

Interacts with pgl-1 and pgl-3; association with either pgl-1 or pgl-3 is not required for P-granule localization. As to expression, highly expressed in the germline.

Its subcellular location is the cytoplasmic granule. Transient component of P-granule which is involved in germline development. This is P granule abnormality protein 2 from Caenorhabditis elegans.